The sequence spans 137 residues: uncharacterized protein (137 aa).

Transmembrane regions (helical) follow at residues 36-52 (LAPP…PFVL) and 113-129 (FYGY…IFCF).

It localises to the membrane. This is an uncharacterized protein from Saccharomyces cerevisiae (strain ATCC 204508 / S288c) (Baker's yeast).